The primary structure comprises 404 residues: MAGRRAQTGSAPPRPAAPHPRPASRAFPQHCRPRDAERPPSPRSPLMPGCELPVGTCPDMCPAAERAQREREHRLHRLEVVPGCRQDPPRADPQRAVKEYSRPAAGKPRPPPSQLRPPSVLLATVRYLAGEVAESADIARAEVASFVADRLRAVLLDLALQGAGDAEAAVVLEAALATLLTVVARLGPDAARGPADPVLLQAQVQEGFGSLRRCYARGAGPHPRQPAFQGLFLLYNLGSVEALHEVLQLPAALRACPPLRKALAVDAAFREGNAARLFRLLQTLPYLPSCAVQCHVGHARREALARFARAFSTPKGQTLPLGFMVNLLALDGLREARDLCQAHGLPLDGEERVVFLRGRYVEEGLPPASTCKVLVESKLRGRTLEEVVMAEEEDEGTDRPGSPA.

2 disordered regions span residues 1 to 58 and 77 to 117; these read MAGR…GTCP and RLEV…QLRP. The segment covering 12–21 has biased composition (pro residues); the sequence is PPRPAAPHPR. Basic and acidic residues predominate over residues 87–101; it reads DPPRADPQRAVKEYS. Positions 203-379 constitute a PCI domain; it reads QVQEGFGSLR…TCKVLVESKL (177 aa). Residue serine 402 is modified to Phosphoserine.

Belongs to the SAC3 family. May be part of a SEM1-containing complex.

It is found in the cytoplasm. The protein resides in the cytoskeleton. Its subcellular location is the microtubule organizing center. It localises to the centrosome. The protein localises to the spindle. In terms of biological role, involved in centrosome duplication and mitotic progression. This Homo sapiens (Human) protein is SAC3 domain-containing protein 1 (SAC3D1).